A 240-amino-acid chain; its full sequence is Ribitol-5-phosphate cytidylyltransferase (240 aa).

Residues 8 to 11 (FAGG) and 81 to 87 (GETGQMS) each bind CTP.

The protein belongs to the IspD/TarI cytidylyltransferase family. TarI subfamily.

The catalysed reaction is D-ribitol 5-phosphate + CTP + H(+) = CDP-L-ribitol + diphosphate. It functions in the pathway cell wall biogenesis; poly(ribitol phosphate) teichoic acid biosynthesis. Catalyzes the transfer of the cytidylyl group of CTP to D-ribitol 5-phosphate. This is Ribitol-5-phosphate cytidylyltransferase from Streptococcus agalactiae serotype V (strain ATCC BAA-611 / 2603 V/R).